The chain runs to 208 residues: Glutathione S-transferase 1 (208 aa).

The 80-residue stretch at 1 to 80 (MDFYYLPGSA…YLVEKYGKTD (80 aa)) folds into the GST N-terminal domain. Residues Ser9, 50 to 52 (HTI), and 64 to 66 (ESR) contribute to the glutathione site. Residues 86-207 (CPKKRAVINQ…AGCLEFKKYF (122 aa)) form the GST C-terminal domain.

It belongs to the GST superfamily. Theta family. In terms of assembly, homodimer.

The enzyme catalyses RX + glutathione = an S-substituted glutathione + a halide anion + H(+). Conjugation of reduced glutathione to a wide number of exogenous and endogenous hydrophobic electrophiles. The chain is Glutathione S-transferase 1 (Gst1) from Musca domestica (House fly).